Here is a 224-residue protein sequence, read N- to C-terminus: Ribonuclease 3 (224 aa).

The region spanning 4–127 is the RNase III domain; the sequence is YSKLEKCLDY…IMGAIYLESG (124 aa). Residue Glu-40 coordinates Mg(2+). The active site involves Asp-44. Residues Asp-113 and Glu-116 each contribute to the Mg(2+) site. Glu-116 is an active-site residue. The DRBM domain occupies 154-223; the sequence is DYKTALQEIT…AKIAIDKLKE (70 aa).

The protein belongs to the ribonuclease III family. Homodimer. It depends on Mg(2+) as a cofactor.

Its subcellular location is the cytoplasm. It catalyses the reaction Endonucleolytic cleavage to 5'-phosphomonoester.. Its function is as follows. Digests double-stranded RNA. Involved in the processing of primary rRNA transcript to yield the immediate precursors to the large and small rRNAs (23S and 16S). Processes some mRNAs, and tRNAs when they are encoded in the rRNA operon. Processes pre-crRNA and tracrRNA of type II CRISPR loci if present in the organism. This chain is Ribonuclease 3, found in Aliarcobacter butzleri (strain RM4018) (Arcobacter butzleri).